A 282-amino-acid polypeptide reads, in one-letter code: Aldo-keto reductase ML1669 (282 aa).

Residue Tyr57 is the Proton donor of the active site. Residues Leu197, Val235, Arg237, Ser238, Ala239, Ser246, Asn247, and Arg273 each coordinate NADPH.

The protein belongs to the aldo/keto reductase family.

The protein is Aldo-keto reductase ML1669 of Mycobacterium leprae (strain TN).